Consider the following 212-residue polypeptide: Imidazole glycerol phosphate synthase subunit HisH (212 aa).

The Glutamine amidotransferase type-1 domain occupies 3-212 (TVAVIDYGMG…QNFIAWDGRW (210 aa)). Cys81 (nucleophile) is an active-site residue. Active-site residues include His190 and Glu192.

Heterodimer of HisH and HisF.

It is found in the cytoplasm. It catalyses the reaction 5-[(5-phospho-1-deoxy-D-ribulos-1-ylimino)methylamino]-1-(5-phospho-beta-D-ribosyl)imidazole-4-carboxamide + L-glutamine = D-erythro-1-(imidazol-4-yl)glycerol 3-phosphate + 5-amino-1-(5-phospho-beta-D-ribosyl)imidazole-4-carboxamide + L-glutamate + H(+). It carries out the reaction L-glutamine + H2O = L-glutamate + NH4(+). Its pathway is amino-acid biosynthesis; L-histidine biosynthesis; L-histidine from 5-phospho-alpha-D-ribose 1-diphosphate: step 5/9. IGPS catalyzes the conversion of PRFAR and glutamine to IGP, AICAR and glutamate. The HisH subunit catalyzes the hydrolysis of glutamine to glutamate and ammonia as part of the synthesis of IGP and AICAR. The resulting ammonia molecule is channeled to the active site of HisF. This chain is Imidazole glycerol phosphate synthase subunit HisH, found in Pseudomonas putida (strain ATCC 47054 / DSM 6125 / CFBP 8728 / NCIMB 11950 / KT2440).